Reading from the N-terminus, the 180-residue chain is PRA1 family protein F1 (180 aa).

The next 4 membrane-spanning stretches (helical) occupy residues 63 to 83, 84 to 104, 123 to 143, and 145 to 165; these read ANTV…VFLS, LIWN…WLFL, IVLI…DAKL, and IAVA…VRKT.

This sequence belongs to the PRA1 family. In terms of assembly, interacts with PRA1F2. In terms of tissue distribution, expressed in hypocotyls, leaf bases and shoot apex.

The protein localises to the endosome membrane. Its function is as follows. May be involved in both secretory and endocytic intracellular trafficking in the endosomal/prevacuolar compartments. The polypeptide is PRA1 family protein F1 (PRA1F1) (Arabidopsis thaliana (Mouse-ear cress)).